The primary structure comprises 458 residues: tRNA modification GTPase MnmE (458 aa).

(6S)-5-formyl-5,6,7,8-tetrahydrofolate is bound by residues Arg26, Glu88, and Arg127. In terms of domain architecture, TrmE-type G spans 224–378 (GLSTAIIGRP…IEDRINQLFF (155 aa)). Position 234 (Asn234) interacts with K(+). GTP contacts are provided by residues 234–239 (NVGKSS), 253–259 (TDIAGTT), and 278–281 (DTAG). Ser238 provides a ligand contact to Mg(2+). K(+) is bound by residues Thr253, Ile255, and Thr258. Thr259 serves as a coordination point for Mg(2+). (6S)-5-formyl-5,6,7,8-tetrahydrofolate is bound at residue Lys458.

It belongs to the TRAFAC class TrmE-Era-EngA-EngB-Septin-like GTPase superfamily. TrmE GTPase family. Homodimer. Heterotetramer of two MnmE and two MnmG subunits. K(+) serves as cofactor.

It localises to the cytoplasm. Functionally, exhibits a very high intrinsic GTPase hydrolysis rate. Involved in the addition of a carboxymethylaminomethyl (cmnm) group at the wobble position (U34) of certain tRNAs, forming tRNA-cmnm(5)s(2)U34. This chain is tRNA modification GTPase MnmE, found in Streptococcus pyogenes serotype M28 (strain MGAS6180).